Reading from the N-terminus, the 257-residue chain is Thioredoxin-dependent peroxide reductase, mitochondrial (257 aa).

The transit peptide at 1–62 directs the protein to the mitochondrion; it reads MAAAAGRLLW…FAFSTSSSFH (62 aa). Residues 64–222 form the Thioredoxin domain; that stretch reads PAVTQHAPHF…PLRLVKAFQF (159 aa). Lys-84 is subject to N6-succinyllysine. The residue at position 92 (Lys-92) is an N6-acetyllysine; alternate. Lys-92 carries the N6-succinyllysine; alternate modification. Cys-109 functions as the Cysteine sulfenic acid (-SOH) intermediate in the catalytic mechanism. At Thr-147 the chain carries Phosphothreonine.

This sequence belongs to the peroxiredoxin family. AhpC/Prx1 subfamily. In terms of assembly, homodimer; disulfide-linked, upon oxidation. 6 homodimers assemble to form a ring-like dodecamer. Interacts with NEK6. Interacts with LRRK2. Interacts with MAP3K13. Interacts with RPS6KC1 (via PX domain). In terms of processing, phosphorylated by LRRK2; phosphorylation reduces perodixase activity. Post-translationally, the enzyme can be inactivated by further oxidation of the cysteine sulfenic acid (C(P)-SOH) to sulphinic acid (C(P)-SO2H) and sulphonic acid (C(P)-SO3H) instead of its condensation to a disulfide bond. S-palmitoylated. As to expression, ubiquitous.

The protein resides in the mitochondrion. It is found in the cytoplasm. Its subcellular location is the early endosome. It carries out the reaction a hydroperoxide + [thioredoxin]-dithiol = an alcohol + [thioredoxin]-disulfide + H2O. Thiol-specific peroxidase that catalyzes the reduction of hydrogen peroxide and organic hydroperoxides to water and alcohols, respectively. Plays a role in cell protection against oxidative stress by detoxifying peroxides. Acts synergistically with MAP3K13 to regulate the activation of NF-kappa-B in the cytosol. Required for the maintenance of physical strength. This is Thioredoxin-dependent peroxide reductase, mitochondrial (Prdx3) from Rattus norvegicus (Rat).